The chain runs to 1704 residues: Vitellogenin-1 (1704 aa).

Positions 1-14 (MKAVVLALTLAFVA) are cleaved as a signal peptide. Residues 22 to 660 (FAAGKTYVYK…DAATFMPKSF (639 aa)) form the Vitellogenin domain. Asn446, Asn635, Asn903, Asn908, Asn1019, Asn1054, Asn1080, Asn1121, Asn1174, Asn1285, Asn1322, Asn1375, Asn1379, Asn1405, Asn1456, and Asn1512 each carry an N-linked (GlcNAc...) asparagine glycan. The span at 1078-1109 (RRNSSSSSSSSSSSSSESRSSRSSSSSSSSSR) shows a compositional bias: low complexity. The interval 1078–1213 (RRNSSSSSSS…SSDRRSKEVM (136 aa)) is disordered. Residues 1122-1204 (SSSSSSSRRS…FSDSSSSSSS (83 aa)) are compositionally biased toward low complexity. The VWFD domain maps to 1442–1617 (AECSFVEDTL…SWILPAESCR (176 aa)). 2 disulfide bridges follow: Cys1444–Cys1580 and Cys1467–Cys1616.

Phosvitin, an egg yolk storage protein, is one of the most highly phosphorylated (10%) proteins in nature. In terms of processing, the N-terminal of the blood vitellogenin is blocked. As to expression, produced by the liver, secreted into the blood and then sequestered by receptor mediated endocytosis into growing oocytes, where it is generally cleaved, giving rise to the respective yolk components composed of complex suite of small cleavage products.

Its function is as follows. Precursor of the major egg-yolk proteins that are sources of nutrients during early development of oviparous organisms. The polypeptide is Vitellogenin-1 (vtg1) (Fundulus heteroclitus (Killifish)).